The following is a 385-amino-acid chain: Endoglucanase 1 (385 aa).

Residues 1 to 17 (MKLVFSALASLLSGASA) form the signal peptide. N93 and N140 each carry an N-linked (GlcNAc...) asparagine glycan. E176 acts as the Proton donor in catalysis. N200 and N237 each carry an N-linked (GlcNAc...) asparagine glycan. E284 functions as the Nucleophile in the catalytic mechanism. N289 and N331 each carry an N-linked (GlcNAc...) asparagine glycan.

It belongs to the glycosyl hydrolase 5 (cellulase A) family.

The catalysed reaction is Endohydrolysis of (1-&gt;4)-beta-D-glucosidic linkages in cellulose, lichenin and cereal beta-D-glucans.. Its pathway is glycan metabolism; cellulose degradation. In terms of biological role, active towards carboxymethyl cellulose. The sequence is that of Endoglucanase 1 (eg 1) from Robillarda sp. (strain Y-20).